We begin with the raw amino-acid sequence, 133 residues long: Small ribosomal subunit protein uS8 (133 aa).

The protein belongs to the universal ribosomal protein uS8 family. As to quaternary structure, part of the 30S ribosomal subunit. Contacts proteins S5 and S12.

Functionally, one of the primary rRNA binding proteins, it binds directly to 16S rRNA central domain where it helps coordinate assembly of the platform of the 30S subunit. The chain is Small ribosomal subunit protein uS8 from Rippkaea orientalis (strain PCC 8801 / RF-1) (Cyanothece sp. (strain PCC 8801)).